We begin with the raw amino-acid sequence, 139 residues long: Ribonuclease P protein component (139 aa).

The interval 120-139 is disordered; it reads KATTGGECTPKSEKCVTAPR.

This sequence belongs to the RnpA family. In terms of assembly, consists of a catalytic RNA component (M1 or rnpB) and a protein subunit.

The enzyme catalyses Endonucleolytic cleavage of RNA, removing 5'-extranucleotides from tRNA precursor.. Functionally, RNaseP catalyzes the removal of the 5'-leader sequence from pre-tRNA to produce the mature 5'-terminus. It can also cleave other RNA substrates such as 4.5S RNA. The protein component plays an auxiliary but essential role in vivo by binding to the 5'-leader sequence and broadening the substrate specificity of the ribozyme. The polypeptide is Ribonuclease P protein component (Chlamydia pneumoniae (Chlamydophila pneumoniae)).